An 898-amino-acid polypeptide reads, in one-letter code: Histone-lysine N-methyltransferase mes-4 (898 aa).

The interval 1-68 (MLPSSGDSSK…APILTNAPKD (68 aa)) is disordered. The segment covering 36 to 51 (QRNATPQGAGSETSSN) has biased composition (polar residues). 2 PHD-type zinc fingers span residues 126–214 (DSKC…CNLD) and 303–355 (IKAC…CVCG). The SET domain occupies 537-665 (EKIKLAATLC…DGDEITFSYN (129 aa)). Residues 671–687 (NLPDCECGAENCMGTMG) enclose the Post-SET domain. The disordered stretch occupies residues 689-847 (AKREKPEVAD…SLQTIQETGK (159 aa)). Over residues 692–704 (EKPEVADSSEKAA) the composition is skewed to basic and acidic residues. Over residues 705–719 (KKNKSSKKKSVKNQN) the composition is skewed to basic residues. 2 stretches are compositionally biased toward low complexity: residues 737–751 (ISPSKPSTSSASSTS) and 761–773 (SQNKKNLKKNSNQ). Residues 774-788 (PVADTGSTLSTSTEL) show a composition bias toward polar residues. A compositionally biased stretch (low complexity) spans 802–811 (SSRSRAASSS).

Belongs to the class V-like SAM-binding methyltransferase superfamily. Histone-lysine methyltransferase family. SET2 subfamily. In terms of tissue distribution, in adults, it is predominantly expressed in the germline, and weakly expressed in intestinal cells.

It localises to the nucleus. It is found in the chromosome. It carries out the reaction L-lysyl(36)-[histone H3] + 2 S-adenosyl-L-methionine = N(6),N(6)-dimethyl-L-lysyl(36)-[histone H3] + 2 S-adenosyl-L-homocysteine + 2 H(+). Histone methyltransferase. Dimethylates 'Lys-36' of histone H3, a specific tag for epigenetic transcriptional activation. Plays a central role in early development and is responsible for all H3 'Lys-36' dimethylation until about the 40-cell stage. Indirectly involved in the global inactivation of the X chromosomes in germline cells, possibly by excluding the mes-2-mes-3-mes-6 repressive Polycomb complex from the autosomes. Not related to transcription elongation. Required for small-RNA-induced H3K27 trimethylation. May suppress sensitivity to RNAi. May regulate the expression of genes required for vulval development. In Caenorhabditis elegans, this protein is Histone-lysine N-methyltransferase mes-4.